The following is a 1149-amino-acid chain: FH2 domain-containing protein 1 (1149 aa).

Disordered stretches follow at residues 18 to 79, 464 to 540, 554 to 660, and 681 to 1149; these read LATA…PPPG, NHDR…SRLS, ESAT…PLLP, and SPKS…PLQK. 2 stretches are compositionally biased toward pro residues: residues 33–48 and 56–79; these read ASPP…PPCP and PSPP…PPPG. The 396-residue stretch at 88–483 folds into the FH2 domain; the sequence is GYSSLGKKKR…QLQRQKEMEQ (396 aa). Basic and acidic residues predominate over residues 464 to 485; the sequence is NHDREEQERKQLQRQKEMEQKR. The span at 486 to 504 shows a compositional bias: polar residues; the sequence is YSWSTGELGSFGRSSSEND. At Ser-501 the chain carries Phosphoserine. Residues 522-532 show a composition bias toward low complexity; that stretch reads PRPNSPSYRPP. 2 stretches are compositionally biased toward polar residues: residues 554–575 and 591–604; these read ESAT…SSPR and SHGP…QASK. A phosphoserine mark is found at Ser-645 and Ser-655. Residues 681 to 693 are compositionally biased toward polar residues; that stretch reads SPKSLEEGSQLTL. Residues 784–795 show a composition bias toward basic and acidic residues; sequence MDSRAGGDKQEE. The span at 801 to 822 shows a compositional bias: low complexity; it reads GSVSSGAGEAGSSQVSSNSVSS. The segment covering 844-856 has biased composition (basic and acidic residues); sequence PKDRPSRGKDAIA. Residues 926–947 are compositionally biased toward polar residues; sequence ETPSSTDTPLSRRSSVRGTSDT. The interval 960-1086 is MTBD; microtubule-binding domain; it reads EEPRLPRSSG…VKGGSEDSAS (127 aa). The segment covering 965-974 has biased composition (low complexity); sequence PRSSGSISGR. Polar residues-rich tracts occupy residues 1042–1052 and 1064–1074; these read ARNTVASSSRS and TGLTRTVSQRQ. Residues 1123-1134 are compositionally biased toward basic and acidic residues; the sequence is GTTERSSLRLKD.

In terms of assembly, interacts with CEP170. Brain, heart and lung (at protein level).

It is found in the golgi apparatus. The protein localises to the cell projection. It localises to the cilium. Its function is as follows. Microtubule-associated formin which regulates both actin and microtubule dynamics. Induces microtubule acetylation and stabilization and actin stress fiber formation. Regulates Golgi ribbon formation. Required for normal cilia assembly. Early in cilia assembly, may assist in the maturation and positioning of the centrosome/basal body, and once cilia assembly has initiated, may also promote cilia elongation by inhibiting disassembly. In Mus musculus (Mouse), this protein is FH2 domain-containing protein 1 (Fhdc1).